The chain runs to 199 residues: uncharacterized protein (199 aa).

The next 3 membrane-spanning stretches (helical) occupy residues 22-44 (VVVVGLYYGFLTTFSIGPSYLFL), 65-87 (TGFIAGQLMMFISIYYAPLHLAL), and 91-108 (HTITVLALPYLLFHFFFW).

This sequence belongs to the ycf1 family.

The protein resides in the mitochondrion membrane. This is an uncharacterized protein from Arabidopsis thaliana (Mouse-ear cress).